Here is a 172-residue protein sequence, read N- to C-terminus: NADH dehydrogenase [ubiquinone] 1 alpha subcomplex subunit 8 (172 aa).

CHCH domains follow at residues 33-74 and 75-118; these read GAQC…FRQI and KRHC…LGWV. 4 consecutive short sequence motifs (cx9C motif) follow at residues 36–46, 56–66, 78–88, and 100–110; these read CDKPNKEFMLC, CLEEGKLVNQC, CAEPFTEYWTC, and CRKQQAQFDEC. Intrachain disulfides connect cysteine 36–cysteine 66, cysteine 46–cysteine 56, cysteine 78–cysteine 110, and cysteine 88–cysteine 100. Residues 133–159 form a disordered region; it reads TDRPLPENPYHSRARPEPNPEVEGDLK. Residues 146–159 are compositionally biased toward basic and acidic residues; sequence ARPEPNPEVEGDLK.

This sequence belongs to the complex I NDUFA8 subunit family. As to quaternary structure, complex I is composed of 45 different subunits.

The protein resides in the mitochondrion inner membrane. It localises to the mitochondrion intermembrane space. The protein localises to the mitochondrion. Functionally, accessory subunit of the mitochondrial membrane respiratory chain NADH dehydrogenase (Complex I), that is believed not to be involved in catalysis. Complex I functions in the transfer of electrons from NADH to the respiratory chain. The immediate electron acceptor for the enzyme is believed to be ubiquinone. The protein is NADH dehydrogenase [ubiquinone] 1 alpha subcomplex subunit 8 (NDUFA8) of Bos taurus (Bovine).